A 206-amino-acid polypeptide reads, in one-letter code: RNA pyrophosphohydrolase (206 aa).

Positions 6–149 (GYRPNVGIVL…KRGVYARALR (144 aa)) constitute a Nudix hydrolase domain. The short motif at 38–59 (GGMNTDETPVEAMYRELQEETG) is the Nudix box element. The tract at residues 175 to 206 (MPGHTAGHDRPRKRPRTRGYWPKKATGDGPAS) is disordered.

It belongs to the Nudix hydrolase family. RppH subfamily. A divalent metal cation is required as a cofactor.

Functionally, accelerates the degradation of transcripts by removing pyrophosphate from the 5'-end of triphosphorylated RNA, leading to a more labile monophosphorylated state that can stimulate subsequent ribonuclease cleavage. The polypeptide is RNA pyrophosphohydrolase (Stenotrophomonas maltophilia (strain K279a)).